The primary structure comprises 152 residues: MLQVFERLDHTHDEISDSITLDQDTRKKSRIKSVTDKGANIGIFVERGHPLLVGEILKTECGLLIEVKGKAEDVSTAVANDWLNFSKVCYHLGNRHTTLQIGELWVRFKPDHVLEQLAENYGLSVNSIPAVFEPENGAYGVRSHGHSHAHDS.

Belongs to the UreE family.

The protein resides in the cytoplasm. In terms of biological role, involved in urease metallocenter assembly. Binds nickel. Probably functions as a nickel donor during metallocenter assembly. This chain is Urease accessory protein UreE, found in Psychromonas ingrahamii (strain DSM 17664 / CCUG 51855 / 37).